A 361-amino-acid polypeptide reads, in one-letter code: Ribosomal RNA large subunit methyltransferase M (361 aa).

Residues Ser193, 226-229, Asp245, Asp265, and Asp283 contribute to the S-adenosyl-L-methionine site; that span reads CPGG. Residue Lys312 is the Proton acceptor of the active site.

It belongs to the class I-like SAM-binding methyltransferase superfamily. RNA methyltransferase RlmE family. RlmM subfamily. In terms of assembly, monomer.

It is found in the cytoplasm. It catalyses the reaction cytidine(2498) in 23S rRNA + S-adenosyl-L-methionine = 2'-O-methylcytidine(2498) in 23S rRNA + S-adenosyl-L-homocysteine + H(+). In terms of biological role, catalyzes the 2'-O-methylation at nucleotide C2498 in 23S rRNA. The protein is Ribosomal RNA large subunit methyltransferase M of Histophilus somni (strain 2336) (Haemophilus somnus).